The primary structure comprises 184 residues: Shikimate kinase (184 aa).

ATP is bound at residue 17–22; the sequence is GAGKTT. Threonine 21 is a binding site for Mg(2+). Residues aspartate 39, arginine 63, and glycine 85 each coordinate substrate. Arginine 123 contributes to the ATP binding site. Arginine 142 lines the substrate pocket.

It belongs to the shikimate kinase family. Monomer. Mg(2+) is required as a cofactor.

The protein localises to the cytoplasm. It carries out the reaction shikimate + ATP = 3-phosphoshikimate + ADP + H(+). It functions in the pathway metabolic intermediate biosynthesis; chorismate biosynthesis; chorismate from D-erythrose 4-phosphate and phosphoenolpyruvate: step 5/7. In terms of biological role, catalyzes the specific phosphorylation of the 3-hydroxyl group of shikimic acid using ATP as a cosubstrate. In Burkholderia pseudomallei (strain 1710b), this protein is Shikimate kinase.